Consider the following 313-residue polypeptide: 18S rRNA aminocarboxypropyltransferase (313 aa).

Positions 1-30 are disordered; the sequence is MGKGKNKMHEPKNGRPQRGANGHSSRQNHR. Positions 62, 110, 133, and 148 each coordinate S-adenosyl-L-methionine. Positions 215–228 are enriched in basic and acidic residues; sequence KETQERKSRAKEED. The tract at residues 215-313 is disordered; that stretch reads KETQERKSRA…SYDPLGNLIR (99 aa). Positions 237–246 are enriched in polar residues; sequence RRGNGSQSDT. The span at 247-257 shows a compositional bias: acidic residues; that stretch reads SESEENSEQSD. A phosphoserine mark is found at Ser-286 and Ser-289.

It belongs to the TDD superfamily. TSR3 family.

It is found in the cytoplasm. It localises to the nucleus. It carries out the reaction an N(1)-methylpseudouridine in rRNA + S-adenosyl-L-methionine = N(1)-methyl-N(3)-[(3S)-3-amino-3-carboxypropyl]pseudouridine in rRNA + S-methyl-5'-thioadenosine + H(+). It catalyses the reaction N(1)-methylpseudouridine(1191) in yeast 18S rRNA + S-adenosyl-L-methionine = N(1)-methyl-N(3)-[(3S)-3-amino-3-carboxypropyl]pseudouridine(1191) in yeast 18S rRNA + S-methyl-5'-thioadenosine + H(+). Its function is as follows. Aminocarboxypropyltransferase that catalyzes the aminocarboxypropyl transfer on pseudouridine at position 1191 (Psi1191) in 18S rRNA. It constitutes the last step in biosynthesis of the hypermodified N1-methyl-N3-(3-amino-3-carboxypropyl) pseudouridine (m1acp3-Psi) conserved in eukaryotic 18S rRNA. Required for processing 35S pre-rRNA at site D. This is 18S rRNA aminocarboxypropyltransferase from Saccharomyces cerevisiae (strain ATCC 204508 / S288c) (Baker's yeast).